Reading from the N-terminus, the 277-residue chain is 3-methyl-2-oxobutanoate hydroxymethyltransferase (277 aa).

Mg(2+)-binding residues include aspartate 53 and aspartate 96. Residues 53–54 (DS), aspartate 96, and lysine 126 each bind 3-methyl-2-oxobutanoate. Glutamate 128 serves as a coordination point for Mg(2+). The active-site Proton acceptor is the glutamate 195.

This sequence belongs to the PanB family. In terms of assembly, homodecamer; pentamer of dimers. It depends on Mg(2+) as a cofactor.

The protein resides in the cytoplasm. The enzyme catalyses 3-methyl-2-oxobutanoate + (6R)-5,10-methylene-5,6,7,8-tetrahydrofolate + H2O = 2-dehydropantoate + (6S)-5,6,7,8-tetrahydrofolate. It functions in the pathway cofactor biosynthesis; (R)-pantothenate biosynthesis; (R)-pantoate from 3-methyl-2-oxobutanoate: step 1/2. Functionally, catalyzes the reversible reaction in which hydroxymethyl group from 5,10-methylenetetrahydrofolate is transferred onto alpha-ketoisovalerate to form ketopantoate. This Chlorobium phaeobacteroides (strain BS1) protein is 3-methyl-2-oxobutanoate hydroxymethyltransferase.